A 341-amino-acid polypeptide reads, in one-letter code: tRNA N6-adenosine threonylcarbamoyltransferase (341 aa).

Fe cation contacts are provided by H114 and H118. Residues 136-140 (LVSGG), D169, G182, D186, and N278 contribute to the substrate site. D304 contributes to the Fe cation binding site.

The protein belongs to the KAE1 / TsaD family. Requires Fe(2+) as cofactor.

It localises to the cytoplasm. It carries out the reaction L-threonylcarbamoyladenylate + adenosine(37) in tRNA = N(6)-L-threonylcarbamoyladenosine(37) in tRNA + AMP + H(+). Required for the formation of a threonylcarbamoyl group on adenosine at position 37 (t(6)A37) in tRNAs that read codons beginning with adenine. Is involved in the transfer of the threonylcarbamoyl moiety of threonylcarbamoyl-AMP (TC-AMP) to the N6 group of A37, together with TsaE and TsaB. TsaD likely plays a direct catalytic role in this reaction. The chain is tRNA N6-adenosine threonylcarbamoyltransferase from Lactococcus lactis subsp. cremoris (strain SK11).